The chain runs to 479 residues: Solute carrier family 46 member 2 (479 aa).

The Cytoplasmic portion of the chain corresponds to Met-1–Glu-23. The helical transmembrane segment at Pro-24–Val-44 threads the bilayer. The Extracellular portion of the chain corresponds to Lys-45–Asn-80. 2 N-linked (GlcNAc...) asparagine glycosylation sites follow: Asn-57 and Asn-61. A helical transmembrane segment spans residues Ile-81–Leu-101. Over Ser-102–Ser-110 the chain is Cytoplasmic. The chain crosses the membrane as a helical span at residues Ile-111 to Leu-131. At Asp-132–Gly-140 the chain is on the extracellular side. The helical transmembrane segment at Ala-141–Leu-161 threads the bilayer. At Gly-162–Arg-174 the chain is on the cytoplasmic side. A helical transmembrane segment spans residues Leu-175–His-195. The Extracellular portion of the chain corresponds to Leu-196 to Gly-207. The chain crosses the membrane as a helical span at residues Leu-208–Val-228. Topologically, residues Leu-229 to Arg-281 are cytoplasmic. The tract at residues Thr-255 to Lys-277 is disordered. The chain crosses the membrane as a helical span at residues Glu-282 to Val-302. The Extracellular portion of the chain corresponds to Asp-303 to Leu-321. A helical transmembrane segment spans residues Gly-322 to Phe-342. At Ser-343–Asp-348 the chain is on the cytoplasmic side. The helical transmembrane segment at Thr-349–Val-369 threads the bilayer. Topologically, residues Lys-370 to Glu-371 are extracellular. A helical membrane pass occupies residues Thr-372–Ile-392. Over Arg-393–Lys-407 the chain is Cytoplasmic. Residues Ile-408–Asn-428 traverse the membrane as a helical segment. The Extracellular portion of the chain corresponds to Lys-429–Thr-441. The chain crosses the membrane as a helical span at residues Cys-442–Tyr-462. The Cytoplasmic portion of the chain corresponds to Lys-463 to Ser-479.

This sequence belongs to the major facilitator superfamily. SLC46A family. In terms of processing, glycosylated. In terms of tissue distribution, expressed on cortical epithelial cells in the thymus. Mainly expressed in the thymic cortex and is highly enriched in SCID thymus. Also expressed in lymph nodes, heart, fetal liver, brain, spleen, intestine and kidney, but not in adult liver, skin, skeletal muscle and lung. Expressed in skin epidermis.

The protein localises to the endosome membrane. The protein resides in the cell membrane. It catalyses the reaction N-acetyl-beta-D-glucosaminyl-(1-&gt;4)-1,6-anhydro-N-acetyl-beta-D-muramoyl-L-alanyl-gamma-D-glutamyl-meso-2,6-diaminopimeloyl-D-alanine(out) + n H(+)(out) = N-acetyl-beta-D-glucosaminyl-(1-&gt;4)-1,6-anhydro-N-acetyl-beta-D-muramoyl-L-alanyl-gamma-D-glutamyl-meso-2,6-diaminopimeloyl-D-alanine(in) + n H(+)(in). The catalysed reaction is L-alanyl-gamma-D-glutamyl-meso-2,6-diaminopimelate(out) + n H(+)(out) = L-alanyl-gamma-D-glutamyl-meso-2,6-diaminopimelate(in) + n H(+)(in). It carries out the reaction N-acetyl-D-muramoyl-L-alanyl-D-isoglutamine(out) + n H(+)(out) = N-acetyl-D-muramoyl-L-alanyl-D-isoglutamine(in) + n H(+)(in). The enzyme catalyses 2',3'-cGAMP(out) + n H(+)(out) = 2',3'-cGAMP(in) + n H(+)(in). It catalyses the reaction 3',3'-cGAMP(out) + n H(+)(out) = 3',3'-cGAMP(in) + n H(+)(in). Down-regulated by the anti-inflammatory drug methotrexate. Its function is as follows. Proton-coupled transporter that delivers pathogen-associated or danger-associated molecular patterns to cytosolic pattern recognition receptors as part of the innate immune response to microbes or tissue injury. Has selectivity toward muropeptides that contain the amino acid diaminopimelic acid (DAP-type peptidoglycan muropeptides) including Tri-DAP and tracheal toxin (TCT), common in Gram-negative bacteria and Gram-positive bacilli. In the context of immune recognition of skin microbiota, shuttles bacterial muropeptides across the endolysosomal membranes into the cytosol for recognition by NOD1, triggering MYD88-dependent secretion of IL1A and neutrophil recruitment in a pyroptosis-type inflammatory process. To a lesser extent and redundantly, transports muramyl dipeptides derived from most bacterial proteoglycans, eliciting NOD2 receptor activation and downstream inflammatory responses. Postulated to function as an importer of cyclic GMP-AMP dinucleotides (cGAMPs) in monocyte and macrophage cell lineages. Selectively imports cGAMPs derived from pathogenic bacteria such as 3'3'-cGAMP thus providing for differential immune recognition of pathogenic versus commensal bacteria. During tumorigenesis may transport extracellular tumor-derived 2'3'-cGAMP across the plasma membrane of M1-polarized macrophages to activate the anti-tumoral stimulator of interferon genes (STING) pathway. The transport mechanism, its electrogenicity and stoichiometry remain to be elucidated. This Mus musculus (Mouse) protein is Solute carrier family 46 member 2.